We begin with the raw amino-acid sequence, 409 residues long: uncharacterized protein (409 aa).

A run of 12 helical transmembrane segments spans residues 3-23 (IIVK…PTTE), 43-63 (ITQI…LSLG), 73-93 (PIVL…IFSV), 95-115 (IEML…GSVI), 135-155 (ILSP…GYII), 162-182 (YVFV…YKIL), 209-229 (ILWL…GFFI), 248-268 (KLAF…GYLI), 283-303 (FIFS…LEFI), 309-329 (LAIS…SLLI), 346-366 (TAGS…TYCV), and 379-399 (LLCL…CILY).

Belongs to the major facilitator superfamily. Bcr/CmlA family.

The protein localises to the cell inner membrane. This is an uncharacterized protein from Rickettsia typhi (strain ATCC VR-144 / Wilmington).